The chain runs to 161 residues: Ribonuclease H (161 aa).

The RNase H type-1 domain occupies 11–152 (GPRPVVIHTD…ADQLARDGLT (142 aa)). Residues aspartate 20, glutamate 58, aspartate 80, and aspartate 144 each coordinate Mg(2+). The tract at residues 137 to 161 (HDENERADQLARDGLTENRMKSRIG) is disordered.

This sequence belongs to the RNase H family. Monomer. Mg(2+) serves as cofactor.

Its subcellular location is the cytoplasm. It catalyses the reaction Endonucleolytic cleavage to 5'-phosphomonoester.. Its function is as follows. Endonuclease that specifically degrades the RNA of RNA-DNA hybrids. The chain is Ribonuclease H from Rhodopseudomonas palustris (strain HaA2).